Consider the following 231-residue polypeptide: Small ribosomal subunit protein uS3 (231 aa).

The region spanning valine 17–alanine 86 is the KH type-2 domain.

This sequence belongs to the universal ribosomal protein uS3 family. Part of the 30S ribosomal subunit.

Functionally, binds the lower part of the 30S subunit head. The protein is Small ribosomal subunit protein uS3 of Methanocorpusculum labreanum (strain ATCC 43576 / DSM 4855 / Z).